The following is a 189-amino-acid chain: H/ACA ribonucleoprotein complex subunit 1-like protein 2 (189 aa).

The segment covering Met-1–Gly-12 has biased composition (gly residues). Disordered regions lie at residues Met-1–Glu-39 and Arg-129–Ala-189. Residues Gly-162–Gly-177 are compositionally biased toward low complexity.

Belongs to the GAR1 family. As to quaternary structure, component of the small nucleolar ribonucleoprotein particle containing H/ACA-type snoRNAs (H/ACA snoRNPs).

It localises to the nucleus. It is found in the nucleolus. Required for ribosome biogenesis. Part of a complex which catalyzes pseudouridylation of rRNA. This involves the isomerization of uridine such that the ribose is subsequently attached to C5, instead of the normal N1. Pseudouridine ('psi') residues may serve to stabilize the conformation of rRNAs. The chain is H/ACA ribonucleoprotein complex subunit 1-like protein 2 from Arabidopsis thaliana (Mouse-ear cress).